Reading from the N-terminus, the 37-residue chain is Cytochrome b6-f complex subunit 7 (37 aa).

A helical membrane pass occupies residues 11–29 (AVILMVLVLFGLAWGFLIL).

The protein belongs to the PetM family. As to quaternary structure, the 4 large subunits of the cytochrome b6-f complex are cytochrome b6, subunit IV (17 kDa polypeptide, PetD), cytochrome f and the Rieske protein, while the 4 small subunits are PetG, PetL, PetM and PetN. The complex functions as a dimer.

The protein localises to the cellular thylakoid membrane. Component of the cytochrome b6-f complex, which mediates electron transfer between photosystem II (PSII) and photosystem I (PSI), cyclic electron flow around PSI, and state transitions. The protein is Cytochrome b6-f complex subunit 7 of Crocosphaera subtropica (strain ATCC 51142 / BH68) (Cyanothece sp. (strain ATCC 51142)).